Here is an 826-residue protein sequence, read N- to C-terminus: 1,4-alpha-glucan-branching enzyme 1, chloroplastic/amyloplastic (826 aa).

Residues 1 to 58 (ATTTTTTHNSKNKQYLAKQKPVELTLGYQNPNGCKVCSFGSKGSIYQKVSSGFKGVSV) constitute a chloroplast transit peptide. Asp-409 (nucleophile) is an active-site residue. Glu-464 functions as the Proton donor in the catalytic mechanism. Positions 782–813 (DTDVARIPDVSMESEDSNLDRIEDNSEDAVDA) are disordered.

This sequence belongs to the glycosyl hydrolase 13 family. GlgB subfamily. In terms of assembly, monomer. In terms of tissue distribution, expressed in roots, leaves, stipules, pods and flowers.

Its subcellular location is the plastid. It localises to the chloroplast. It is found in the amyloplast. It carries out the reaction Transfers a segment of a (1-&gt;4)-alpha-D-glucan chain to a primary hydroxy group in a similar glucan chain.. Its pathway is glycan biosynthesis; starch biosynthesis. Catalyzes the formation of the alpha-1,6-glucosidic linkages in starch by scission of a 1,4-alpha-linked oligosaccharide from growing alpha-1,4-glucan chains and the subsequent attachment of the oligosaccharide to the alpha-1,6 position. May preferentially transfer long chains during branching. This chain is 1,4-alpha-glucan-branching enzyme 1, chloroplastic/amyloplastic (SBEII), found in Pisum sativum (Garden pea).